We begin with the raw amino-acid sequence, 285 residues long: RNA polymerase sigma factor RpoH (285 aa).

Residues 53–122 (LILSHLRFVA…IHEYVLRNWR (70 aa)) are sigma-70 factor domain-2. The Interaction with polymerase core subunit RpoC signature appears at 77–80 (DLIQ). The sigma-70 factor domain-4 stretch occupies residues 229–281 (ALEGLDERSQHIIRARWLDDDNKSTLQELADQYGVSAERVRQLEKNAMKKLKM). The segment at residues 254–273 (LQELADQYGVSAERVRQLEK) is a DNA-binding region (H-T-H motif).

This sequence belongs to the sigma-70 factor family. RpoH subfamily. As to quaternary structure, interacts with the RNA polymerase core enzyme.

It is found in the cytoplasm. Sigma factors are initiation factors that promote the attachment of RNA polymerase to specific initiation sites and are then released. This sigma factor is involved in regulation of expression of heat shock genes. This is RNA polymerase sigma factor RpoH from Serratia marcescens.